Reading from the N-terminus, the 640-residue chain is Biosynthetic arginine decarboxylase (640 aa).

Lys-109 carries the post-translational modification N6-(pyridoxal phosphate)lysine. Leu-291–Tyr-301 lines the substrate pocket.

This sequence belongs to the Orn/Lys/Arg decarboxylase class-II family. SpeA subfamily. Mg(2+) serves as cofactor. It depends on pyridoxal 5'-phosphate as a cofactor.

It catalyses the reaction L-arginine + H(+) = agmatine + CO2. The protein operates within amine and polyamine biosynthesis; agmatine biosynthesis; agmatine from L-arginine: step 1/1. Its function is as follows. Catalyzes the biosynthesis of agmatine from arginine. This Synechococcus sp. (strain RCC307) protein is Biosynthetic arginine decarboxylase.